The following is a 362-amino-acid chain: Histidinol-phosphate aminotransferase (362 aa).

Lys218 carries the N6-(pyridoxal phosphate)lysine modification.

This sequence belongs to the class-II pyridoxal-phosphate-dependent aminotransferase family. Histidinol-phosphate aminotransferase subfamily. As to quaternary structure, homodimer. Pyridoxal 5'-phosphate serves as cofactor.

It catalyses the reaction L-histidinol phosphate + 2-oxoglutarate = 3-(imidazol-4-yl)-2-oxopropyl phosphate + L-glutamate. It participates in amino-acid biosynthesis; L-histidine biosynthesis; L-histidine from 5-phospho-alpha-D-ribose 1-diphosphate: step 7/9. The chain is Histidinol-phosphate aminotransferase from Xanthomonas campestris pv. campestris (strain ATCC 33913 / DSM 3586 / NCPPB 528 / LMG 568 / P 25).